The primary structure comprises 330 residues: MSIHSPGYTVRRIPVNNVTDTTMFILTGFTDDADLQVLLFLLFFVIYLFTLIGNLGLVLLVIGDSRLHNPMYYFLSVLSFLDACYSTVVTPKMLVNFISNDKSISYPGCVTEMFLFVTFGTTECFLLAAMAYDRFVAIYNPLLYAVKMSPRVYIPLIIACYSGGIMHATIHTVATFSLSFCASNEIRHVFCDIPPLLAISCSNTNINQLLLFYCVGSIEIITILIVLVSYSFILFAILKMNSAEGRRKIFSTCGSHLTGVSIYHGTILFMYVRPSSNYALEHDMIVSTFYTIVIPMLNPIIYSLRNKDVKEAMKKIFERNFFMNKVHFKL.

Residues 1–37 lie on the Extracellular side of the membrane; the sequence is MSIHSPGYTVRRIPVNNVTDTTMFILTGFTDDADLQV. The N-linked (GlcNAc...) asparagine glycan is linked to Asn-17. The chain crosses the membrane as a helical span at residues 38–58; it reads LLFLLFFVIYLFTLIGNLGLV. The Cytoplasmic segment spans residues 59-66; sequence LLVIGDSR. A helical transmembrane segment spans residues 67–87; the sequence is LHNPMYYFLSVLSFLDACYST. Over 88–111 the chain is Extracellular; that stretch reads VVTPKMLVNFISNDKSISYPGCVT. The cysteines at positions 109 and 201 are disulfide-linked. A helical transmembrane segment spans residues 112–132; that stretch reads EMFLFVTFGTTECFLLAAMAY. Over 133 to 145 the chain is Cytoplasmic; that stretch reads DRFVAIYNPLLYA. A helical membrane pass occupies residues 146–166; that stretch reads VKMSPRVYIPLIIACYSGGIM. The Extracellular portion of the chain corresponds to 167–208; sequence HATIHTVATFSLSFCASNEIRHVFCDIPPLLAISCSNTNINQ. Residues 209–229 form a helical membrane-spanning segment; the sequence is LLLFYCVGSIEIITILIVLVS. Residues 230–249 lie on the Cytoplasmic side of the membrane; it reads YSFILFAILKMNSAEGRRKI. Residues 250–270 form a helical membrane-spanning segment; the sequence is FSTCGSHLTGVSIYHGTILFM. The Extracellular portion of the chain corresponds to 271 to 283; that stretch reads YVRPSSNYALEHD. Residues 284–304 traverse the membrane as a helical segment; the sequence is MIVSTFYTIVIPMLNPIIYSL. Residues 305 to 330 lie on the Cytoplasmic side of the membrane; the sequence is RNKDVKEAMKKIFERNFFMNKVHFKL.

The protein belongs to the G-protein coupled receptor 1 family.

It is found in the cell membrane. Functionally, potential odorant receptor. In Mus musculus (Mouse), this protein is Olfactory receptor 5T9.